A 266-amino-acid chain; its full sequence is Undecaprenyl-diphosphatase (266 aa).

8 helical membrane-spanning segments follow: residues 1-21 (MTWL…FLPI), 39-59 (QGLA…MVYF), 87-107 (WAVI…DSWI), 111-131 (LRSA…LGMA), 143-163 (FTLK…IPGT), 186-206 (FSFL…GLEL), 217-237 (EIAG…HLFL), and 243-263 (IGFM…LVWL).

The protein belongs to the UppP family.

The protein localises to the cell inner membrane. The enzyme catalyses di-trans,octa-cis-undecaprenyl diphosphate + H2O = di-trans,octa-cis-undecaprenyl phosphate + phosphate + H(+). Its function is as follows. Catalyzes the dephosphorylation of undecaprenyl diphosphate (UPP). Confers resistance to bacitracin. This is Undecaprenyl-diphosphatase from Hahella chejuensis (strain KCTC 2396).